We begin with the raw amino-acid sequence, 855 residues long: MAGPRGALLAWCRRQCEGYRGVDIRDLSSSFRDGLAFCAILHRHRPDLLDFQSLSKENVFENNRLAFEVAEKELGIPALLDPNDMVSMSVPDCLSIMTYVSQYYNHFTSSGQAAASPPKPGKDPAAPSPTSTSPAVQPGEEAQGDDLSPDSLSEQGKPQPPSSACAACGQRVHLVQRYLAEGRLYHRHCFRCRQCSSTLVPGSYSSGPEEGTFVCAERCTRLGLGGRSGTRPLSLQKQQPAAAAEAKDGEDSDLSKSVVVVAAEADGLQASSEVQPHTLTKPPLPSKPQDLASPPVSRPTPAPRKASESSALTPPTPRPRSSLQQDGMVEQSVSGDLVNGRLQELPVPKPRGTPKLSERMTAPRKDPPWITLVQTEPKKKPAPLPPSSGPGPLSQASRQVENGGLEEKTQKSPAAEPEPKPYNPFEEEEEEEEASVPAVPSPAPAPPETTPKSLHPWYNITPTSSPKTKKRPAPKAPSASPLVLHASRLSHSEPPSATPSPALSVESLSSESSSHTANTEPSEPPAVPKSSSDPAVHVPGTPGTSANSVTPSAHSSLSSSGELGQPSGEQMPQARTRGSPGTHSTKPFSGATPTPFLLAGDQKSPAPPMGSSSPQMLIKSSCKENPFNRKPSPSTSPTVRKATKGAKPVRPPAPGHGFPLIKRKVQADQYIPEEDIYGEMDSIERQLDALEHSGVLLEEKLRGGANEGSEDDMLVDWFKLIHEKHLLVRRESELIYVFKQQNLEQRQADVEFELRCLLNKPEKDWTDDDRAREKVLMQELMTLIEQRDAIVNCLDEDRQREEEEDKMLETMIKKKDFQREAESDSKKKGKFKTMKVLKLLGNKRDAKSKAPTGKS.

Residues 2-108 (AGPRGALLAW…YVSQYYNHFT (107 aa)) enclose the Calponin-homology (CH) domain. 3 disordered regions span residues 110 to 165 (SGQA…SSAC), 226 to 253 (GRSG…EDSD), and 269 to 659 (QASS…HGFP). Over residues 124–135 (PAAPSPTSTSPA) the composition is skewed to low complexity. The region spanning 163 to 226 (SACAACGQRV…ERCTRLGLGG (64 aa)) is the LIM zinc-binding domain. Over residues 269 to 278 (QASSEVQPHT) the composition is skewed to polar residues. Phosphoserine is present on residues serine 293 and serine 307. Over residues 308–325 (ESSALTPPTPRPRSSLQQ) the composition is skewed to polar residues. 2 positions are modified to phosphothreonine: threonine 313 and threonine 316. Over residues 356–367 (LSERMTAPRKDP) the composition is skewed to basic and acidic residues. An NPF1 motif is present at residues 423-425 (NPF). Over residues 425–434 (FEEEEEEEEA) the composition is skewed to acidic residues. The segment covering 439-449 (VPSPAPAPPET) has biased composition (pro residues). Threonine 461 and threonine 463 each carry phosphothreonine. Residues serine 464, serine 465, serine 478, and serine 480 each carry the phosphoserine modification. Over residues 499–514 (PSPALSVESLSSESSS) the composition is skewed to low complexity. The segment covering 542-554 (PGTSANSVTPSAH) has biased composition (polar residues). Over residues 555-570 (SSLSSSGELGQPSGEQ) the composition is skewed to low complexity. Serine 613 is subject to Phosphoserine. The NPF2 motif lies at 625–627 (NPF). The tract at residues 644 to 855 (KGAKPVRPPA…AKSKAPTGKS (212 aa)) is mediates the interaction with RAB13 and intramolecular interaction with the calponin-homology (CH) domain. The bMERB domain maps to 663-810 (RKVQADQYIP…EEEEDKMLET (148 aa)). Residues 679–703 (EMDSIERQLDALEHSGVLLEEKLRG) adopt a coiled-coil conformation. Residues serine 682 and serine 732 each carry the phosphoserine modification. The necessary and sufficient to associate with tubular recycling endosome membranes, mediate phosphatidic acid-binding and membrane tubulation stretch occupies residues 692 to 855 (HSGVLLEEKL…AKSKAPTGKS (164 aa)). Residues 794–822 (LDEDRQREEEEDKMLETMIKKKDFQREAE) are a coiled coil. Residues 815-826 (KDFQREAESDSK) are compositionally biased toward basic and acidic residues. The segment at 815–855 (KDFQREAESDSKKKGKFKTMKVLKLLGNKRDAKSKAPTGKS) is disordered.

As to quaternary structure, homooligomer. Interacts (via NPF1 motif) with EHD1 (via EH domain); the interaction is direct and probably recruits EHD1 to membranes. Interacts with EHD3 (via EH domain). Interacts with RAB35 (GTP-bound form); the interaction is direct and probably recruits MICALL1 to membranes. Interacts with ACAP2; the interaction is indirect through RAB35. Interacts with RAB8A (GTP-bound form); regulates RAB8A association with recycling endosomes. Interacts with RAB13 (GTP-bound form). Interacts with ARF6 (GTP-bound form). Interacts with PACSIN2 (via the SH3 domain). Interacts with DPYSL2.

Its subcellular location is the recycling endosome membrane. It localises to the late endosome membrane. The protein localises to the cell projection. It is found in the cilium membrane. The protein resides in the cytoplasm. Its subcellular location is the cytoskeleton. It localises to the microtubule organizing center. The protein localises to the centrosome. It is found in the centriole. Functionally, lipid-binding protein with higher affinity for phosphatidic acid, a lipid enriched in recycling endosome membranes. On endosome membranes, acts as a downstream effector of Rab proteins recruiting cytosolic proteins to regulate membrane tubulation. Involved in a late step of receptor-mediated endocytosis regulating for instance endocytosed-EGF receptor trafficking. Alternatively, regulates slow endocytic recycling of endocytosed proteins back to the plasma membrane. Also involved in cargo protein delivery to the plasma membrane. Plays a role in ciliogenesis coordination, recruits EHD1 to primary cilium where it is anchored to the centriole through interaction with tubulins. May indirectly play a role in neurite outgrowth. This chain is MICAL-like protein 1 (Micall1), found in Rattus norvegicus (Rat).